The sequence spans 559 residues: DNA primase (559 aa).

The CHC2-type zinc finger occupies 37–61 (CPFHEERSASFSVNQIKGFYHCFGC). Residues 246-327 (KQVIVTEGYL…RGGVILFENN (82 aa)) enclose the Toprim domain. Mg(2+) contacts are provided by Glu252, Asp296, and Asp298.

Belongs to the DnaG primase family. In terms of assembly, monomer. The C-terminal domain DnaB-binding domain exists as a dimer in solution. Interacts with DnaB via its C-terminal domain (residues 415-559 of DnaG); up to 3 DnaG fragments bind to a DnaB hexamer. Zn(2+) serves as cofactor. The cofactor is Mg(2+).

The enzyme catalyses ssDNA + n NTP = ssDNA/pppN(pN)n-1 hybrid + (n-1) diphosphate.. Its function is as follows. RNA polymerase that catalyzes the synthesis of short RNA molecules used as primers for DNA polymerase during DNA replication. Stimulates the 5'-3' DNA helicase activity of DnaB. The protein is DNA primase of Helicobacter pylori (strain ATCC 700392 / 26695) (Campylobacter pylori).